A 466-amino-acid chain; its full sequence is Soluble pyridine nucleotide transhydrogenase (466 aa).

36–45 is an FAD binding site; it reads ERYQNVGGGC.

The protein belongs to the class-I pyridine nucleotide-disulfide oxidoreductase family. As to quaternary structure, homooligomer; probable homooctamer. FAD serves as cofactor.

The protein resides in the cytoplasm. It catalyses the reaction NAD(+) + NADPH = NADH + NADP(+). In terms of biological role, conversion of NADPH, generated by peripheral catabolic pathways, to NADH, which can enter the respiratory chain for energy generation. The protein is Soluble pyridine nucleotide transhydrogenase of Shigella flexneri.